A 538-amino-acid polypeptide reads, in one-letter code: Cytochrome P450 monooxygenase okaG (538 aa).

The chain crosses the membrane as a helical span at residues 3 to 23 (LISPLAAVLSAMAIVLGLLFF). C484 serves as a coordination point for heme.

It belongs to the cytochrome P450 family. Requires heme as cofactor.

The protein resides in the membrane. It catalyses the reaction 12-deshydroxyl okaramine E + 2 reduced [NADPH--hemoprotein reductase] + 2 O2 = 3-desmethyl okaramine B + 2 oxidized [NADPH--hemoprotein reductase] + 2 H2O + 2 H(+). It participates in alkaloid biosynthesis. Nonribosomal peptide synthetase; part of the gene cluster that mediates the biosynthesis of okaramine B, a prenylated indole alkaloid that possesses an unusual octacyclic ring system, including a four-membered azetidine ring and an eight-membered azocine ring, and that exhibits insecticidal activity against silkworm larvae. Within the pathway, okaG acts as a 2,3-diol synthase that installs 2,3-diol on the okaramine scaffold to convert 12-deshydroxyl okaramine E into 3-desmethyl okaramine B. OkaG is also able to produce use okaramine E and produce okaramine D with the help of the methyltransferase okaF. The biosynthesis begins with the NRPS okaA that condenses two tryptophan molecules into cyclo(L-Trp-L-Trp). Prenylation by the prenyltransferase okaC then leads to the formation of cyclo(N8-(alpha,alpha-dimethylallyl)-L-Trp-6a-(alpha,alpha-dime-thylallyl)-L-Trp). This is followed by indole 2,3-epoxidation by the FAD-dependent monooxygenase okaB to facilitate the formation of the hexahydropyrrolo[2,3-b]indole (HPI) moiety of okaramine C. The cytochrome P450 monooxygenase okaD then likely catalyzes formation of the eight-membered ring of okaramine A. The dioxygenase okaE further forms the unusual 2-dimethyl-3-methyl-azetidine ring to yield 12-deshydroxyl okaramine E, as well as the hydroxylation of 12-deshydroxyl okaramine E to produce okaramine E. The cytochrome P450 monoxygenase okaG converts 12-deshydroxyl okaramine E into 3-desmethyl okaramine B which is further methylated by the methyltransferase okaF into okaramine B. In a shunt pathway, okaG and okaF together are also able to convert okaramine E into okaramine D. Okaramine H is produced by nonenzymatic conversion from okaramine A. This chain is Cytochrome P450 monooxygenase okaG, found in Penicillium ochrochloron.